Reading from the N-terminus, the 357-residue chain is Phenylalanine--tRNA ligase alpha subunit (357 aa).

Glutamate 257 contacts Mg(2+).

This sequence belongs to the class-II aminoacyl-tRNA synthetase family. Phe-tRNA synthetase alpha subunit type 1 subfamily. In terms of assembly, tetramer of two alpha and two beta subunits. Mg(2+) serves as cofactor.

The protein resides in the cytoplasm. The catalysed reaction is tRNA(Phe) + L-phenylalanine + ATP = L-phenylalanyl-tRNA(Phe) + AMP + diphosphate + H(+). This Roseobacter denitrificans (strain ATCC 33942 / OCh 114) (Erythrobacter sp. (strain OCh 114)) protein is Phenylalanine--tRNA ligase alpha subunit.